The primary structure comprises 706 residues: Polyribonucleotide nucleotidyltransferase (706 aa).

Mg(2+) is bound by residues Asp488 and Asp494. In terms of domain architecture, KH spans 555–614; it reads PRLFTMKINPDKIRDVIGKGGSVIRALTEETGTQINIDEDGTITIASADPAKAEEAKRRI. The S1 motif domain maps to 624–692; the sequence is GKIYEGPITK…EKGRIKLSMK (69 aa).

It belongs to the polyribonucleotide nucleotidyltransferase family. Requires Mg(2+) as cofactor.

The protein resides in the cytoplasm. It catalyses the reaction RNA(n+1) + phosphate = RNA(n) + a ribonucleoside 5'-diphosphate. In terms of biological role, involved in mRNA degradation. Catalyzes the phosphorolysis of single-stranded polyribonucleotides processively in the 3'- to 5'-direction. The polypeptide is Polyribonucleotide nucleotidyltransferase (Albidiferax ferrireducens (strain ATCC BAA-621 / DSM 15236 / T118) (Rhodoferax ferrireducens)).